The chain runs to 180 residues: UPF0149 protein XOO1028 (180 aa).

Belongs to the UPF0149 family.

The polypeptide is UPF0149 protein XOO1028 (Xanthomonas oryzae pv. oryzae (strain MAFF 311018)).